The chain runs to 1637 residues: MADDEAAVLPPPPPLPPPCRPHRQLRPRGSRPTADTTPRTSQLVEVFEAALRGNTIAVLDTGSGKTMVAVMLAREHARRVRAGEAPRRIVVFLAPTVHLVHQQFEVIREYTDLDVMMCSGASRVGEWGADHWKEEVGRNEIVVMTPQILLDALRHAFLTMSAVSLLIFDECHRACGSHPYARIMKEFYFGSQWRPDVFGMTASPVATKGASTLHNCEAHISQLELTLDAKIYIVEDRNELESFSPPTTIVNKYYDAYMVDFDNLKSKLQIFSDEFDSLLVGLQESPSNKFKDTDNILETSRKSLSRYHGKILYSLNDLGPIITSEVVKIHIESVKPLCDSEDCIFSKASLCLHMSYFKEALSLIEEILPQGYGELMKSESGSEELTKRGYISSKVNTLINIFKSFGSSNEVLCLIFVDRIITAKAVERFMRGIVNFSCFSISYLTGGSTSKDALSPAVQRFTLDLFRAGKVNLLFTTDVTEEGVDVPNCSCVIRFDLPRTVCSYVQSRGRARRNNSEFILMIERGNLQQQEHIFRMIQTGYYVKNCALYRHPNALSYDLSIQGMYTYQVQSTGATITADCCVNLIRKYCEKLPKDRYFMPKPSFEVTIEDGLFKCTLTLPRNAAFQSIVGPLSSSSNLSKQLVSLEACKKLHQLGELNDHLVPLTEEPMDTDFTTADEKCISGPGTTKRKELHGTTCVLALSGTWIHDSENITLNTYRIDFLCDQEGENYAGFVLLMEPELDDDVAPSKMDLFLIPNKMVYTTVTPRGKVQLNKKQLGKGKLFQEFFFNGIFGRLFHGSRKSGAQRDFIFKKGHEIQWNTESMYLLLPLRDSSYIQDDLSIHWEAIESCAGAVEQLWSSYQGDENVIPVNCIPQKRRGGQEEIIHLANKSLHCSSIKDSVVLSLHTGRIYTVLDLILDTTAEDSFDEMCKGKASPFTSFVDYYHQKYGIIIQHPEQPLLLLKQSHNAHNLLFSKLKYLDGSTGKPLLMEKEQIHARVPPELLIHLDVTTDILKSFYLLPSVIHRLQSLMLASQLRREIGYNQHIPVTLILEAITTLRCCETFSLERLELLGDSVLKYVVGCDLFLRYPMKHEGQLSDMRSKAVCNATLHKHGIWRSLQGYVRDNAFDPRRWVAPGQISLRPFPCNCGIETAFVPSHRRYIRDDPSFFVGKPCDRGHRWMCSKTISDCVEALVGAYYVGGGIAAALWVMRWFGIDIKCDMKLLQEVKFNASHLCSLSKINDIEELEAKLKYNFSVKGLLLEAITHPSLQELGVDYCYQRLEFLGDSVLDLLLTRHLYATHTDVDPGELTDLRSALVSNENFAQAVVRNNIHSHLQHGSGILLEQITEYVRSNLECQGKESEFLQHTTCKVPKVLGDIMESIAGAVFIDTDFNVDMVWEIFEPLLSPLITPDKLALPPYRELLELCSHIGCFLNSKCTSKGEEVIIEMSLQLRDELLVAQGHDRNKKRAKAKAASRILADLKQQGLSIKQCLSKAKQLDIVTSDLQFDLTSSGTQLSYSDLNDYHILEGLSSVKKEVVLPLKMEKGGPRSALFKLCKILQWPMPEFEFVEQRFRTPIVMDGATTTNFNSFVSTITLHIPDATTITFQGERRTDKKSAQDSASLMMLHKLQELKICICKT.

The tract at residues 1–40 is disordered; sequence MADDEAAVLPPPPPLPPPCRPHRQLRPRGSRPTADTTPRT. Residues 9-19 are compositionally biased toward pro residues; sequence LPPPPPLPPPC. Over residues 20–29 the composition is skewed to basic residues; that stretch reads RPHRQLRPRG. Positions 46 to 222 constitute a Helicase ATP-binding domain; sequence VFEAALRGNT…LHNCEAHISQ (177 aa). Residue 59–66 participates in ATP binding; it reads LDTGSGKT. The DECH box signature appears at 169–172; that stretch reads DECH. The region spanning 404–556 is the Helicase C-terminal domain; it reads SFGSSNEVLC…ALYRHPNALS (153 aa). The region spanning 581–671 is the Dicer dsRNA-binding fold domain; the sequence is CVNLIRKYCE…VPLTEEPMDT (91 aa). The 125-residue stretch at 882–1006 folds into the PAZ domain; the sequence is EIIHLANKSL…VPPELLIHLD (125 aa). Residues 1031–1200 enclose the RNase III 1 domain; that stretch reads ASQLRREIGY…LVGAYYVGGG (170 aa). Positions 1214, 1309, and 1312 each coordinate Mg(2+). The RNase III 2 domain occupies 1241–1389; the sequence is IEELEAKLKY…IAGAVFIDTD (149 aa). 2 consecutive DRBM domains span residues 1412 to 1481 and 1545 to 1629; these read LALP…DLKQ and GPRS…KLQE.

The protein belongs to the helicase family. Dicer subfamily. As to quaternary structure, may interact with ARGONAUTE1 or PINHEAD through their common PAZ domains. It depends on Mg(2+) as a cofactor. Requires Mn(2+) as cofactor.

It is found in the nucleus. In terms of biological role, probably involved in the RNA silencing pathway. May cleave double-stranded RNA to produce short 21-24 nucleotides (nt) RNAs which target the selective destruction of complementary RNAs. The sequence is that of Endoribonuclease Dicer homolog 3b (DCL3B) from Oryza sativa subsp. japonica (Rice).